The primary structure comprises 466 residues: MAKTLYEKVWDNHIVFAGEGEAPIIYVDRHLVHEVTSPQAFSGLKVAGRKLRAPEKTFATMDHNTSTTSASLDALSPMARTQVETLERNCKEFGVRLYDIHHKNQGIVHVMGPELGITLPGTVIVCGDSHTATHGAFGALAFGIGTSEVEHVMATQTLRQLKAKTMKIEVRGKVADGITAKDIVLAIIGKIGMDGGTGYVVEFCGEAIEALSMEGRMTVCNMAIEMGAKAGMIAPDTTTAEYLEGREFAPKGASWEQAVEAWSQLKTDADAVFDATVVIEAKDIAPQLTWGTNPGQVVAIDQLVPNPLDATNPTVRTSIENALQYVDLTAGTLMTDVSINKVFIGSCTNSRIEDLRAAAVHAKGRKVADGVKAIVVPGSGLVKEQAEAEGLDKIFLEAGFEWRLPGCSMCLAMNDDKLEVGDRCASTSNRNFEGRQGRGSRTHLVSPAMAAAAAVAGHFVDIRKPY.

C347, C407, and C410 together coordinate [4Fe-4S] cluster.

It belongs to the aconitase/IPM isomerase family. LeuC type 1 subfamily. Heterodimer of LeuC and LeuD. [4Fe-4S] cluster is required as a cofactor.

The catalysed reaction is (2R,3S)-3-isopropylmalate = (2S)-2-isopropylmalate. It participates in amino-acid biosynthesis; L-leucine biosynthesis; L-leucine from 3-methyl-2-oxobutanoate: step 2/4. Its function is as follows. Catalyzes the isomerization between 2-isopropylmalate and 3-isopropylmalate, via the formation of 2-isopropylmaleate. This chain is 3-isopropylmalate dehydratase large subunit, found in Shewanella halifaxensis (strain HAW-EB4).